The following is a 248-amino-acid chain: Pyridoxine 5'-phosphate synthase (248 aa).

Residue asparagine 12 participates in 3-amino-2-oxopropyl phosphate binding. 14–15 (DH) lines the 1-deoxy-D-xylulose 5-phosphate pocket. Arginine 23 contributes to the 3-amino-2-oxopropyl phosphate binding site. The Proton acceptor role is filled by histidine 48. Arginine 50 and histidine 55 together coordinate 1-deoxy-D-xylulose 5-phosphate. Glutamate 75 serves as the catalytic Proton acceptor. Threonine 105 is a 1-deoxy-D-xylulose 5-phosphate binding site. Residue histidine 196 is the Proton donor of the active site. Residues glycine 197 and 218 to 219 (GH) contribute to the 3-amino-2-oxopropyl phosphate site.

This sequence belongs to the PNP synthase family. Homooctamer; tetramer of dimers.

Its subcellular location is the cytoplasm. It catalyses the reaction 3-amino-2-oxopropyl phosphate + 1-deoxy-D-xylulose 5-phosphate = pyridoxine 5'-phosphate + phosphate + 2 H2O + H(+). It participates in cofactor biosynthesis; pyridoxine 5'-phosphate biosynthesis; pyridoxine 5'-phosphate from D-erythrose 4-phosphate: step 5/5. Its function is as follows. Catalyzes the complicated ring closure reaction between the two acyclic compounds 1-deoxy-D-xylulose-5-phosphate (DXP) and 3-amino-2-oxopropyl phosphate (1-amino-acetone-3-phosphate or AAP) to form pyridoxine 5'-phosphate (PNP) and inorganic phosphate. The chain is Pyridoxine 5'-phosphate synthase from Pseudomonas fluorescens (strain ATCC BAA-477 / NRRL B-23932 / Pf-5).